We begin with the raw amino-acid sequence, 640 residues long: ETV5-related protein Ets96B (640 aa).

The interval 315 to 375 (HADSTTTAAQ…HHGHQQAEQQ (61 aa)) is disordered. Residues 321–356 (TAAQQQQQQQEQQQQQQQQQQQQQHQQQLQQAAALH) adopt a coiled-coil conformation. The span at 322-355 (AAQQQQQQQEQQQQQQQQQQQQQHQQQLQQAAAL) shows a compositional bias: low complexity. Residues 356 to 369 (HPHHHHSHHGHHGH) show a composition bias toward basic residues. The segment at residues 498–579 (LQLWQFLVAL…NGERYVYRFV (82 aa)) is a DNA-binding region (ETS). Positions 609–624 (LAKTPPTSGDSQTQSP) are enriched in polar residues. A disordered region spans residues 609 to 628 (LAKTPPTSGDSQTQSPRVAK).

The protein belongs to the ETS family. In terms of tissue distribution, in the adult brain, expressed almost exclusively in dopaminergic neurons.

It localises to the nucleus. Required in dopaminergic neurons to regulate expression of genes involved in dopamine signaling. Decreases expression of the dopamine transporter DAT and increases expression of the dopamine transporter Vmat and the tyrosine 3-monooxygenase ple which is involved in dopamine biosynthesis. Also involved in negatively regulating the expression of a group of endoplasmic reticulum proteins, the molecular chaperone Calr and the protein disulfide isomerases CaBP1 and ERp60. In Drosophila melanogaster (Fruit fly), this protein is ETV5-related protein Ets96B.